We begin with the raw amino-acid sequence, 247 residues long: Adenosylcobinamide-GDP ribazoletransferase (247 aa).

The next 5 helical transmembrane spans lie at 34–54 (IITF…VFMV), 59–79 (CGVP…TGGF), 113–133 (GGLA…ELTL), 138–158 (ILAS…LLMY), and 194–214 (VLLP…AIFI).

It belongs to the CobS family. The cofactor is Mg(2+).

It is found in the cell inner membrane. It catalyses the reaction alpha-ribazole + adenosylcob(III)inamide-GDP = adenosylcob(III)alamin + GMP + H(+). It carries out the reaction alpha-ribazole 5'-phosphate + adenosylcob(III)inamide-GDP = adenosylcob(III)alamin 5'-phosphate + GMP + H(+). It participates in cofactor biosynthesis; adenosylcobalamin biosynthesis; adenosylcobalamin from cob(II)yrinate a,c-diamide: step 7/7. Joins adenosylcobinamide-GDP and alpha-ribazole to generate adenosylcobalamin (Ado-cobalamin). Also synthesizes adenosylcobalamin 5'-phosphate from adenosylcobinamide-GDP and alpha-ribazole 5'-phosphate. The polypeptide is Adenosylcobinamide-GDP ribazoletransferase (Escherichia coli O127:H6 (strain E2348/69 / EPEC)).